The sequence spans 126 residues: Phosphoribosyl-AMP cyclohydrolase (126 aa).

Asp74 contributes to the Mg(2+) binding site. Cys75 is a binding site for Zn(2+). 2 residues coordinate Mg(2+): Asp76 and Asp78. Zn(2+) is bound by residues Cys92 and Cys99.

This sequence belongs to the PRA-CH family. As to quaternary structure, homodimer. Mg(2+) serves as cofactor. Requires Zn(2+) as cofactor.

It localises to the cytoplasm. It catalyses the reaction 1-(5-phospho-beta-D-ribosyl)-5'-AMP + H2O = 1-(5-phospho-beta-D-ribosyl)-5-[(5-phospho-beta-D-ribosylamino)methylideneamino]imidazole-4-carboxamide. It functions in the pathway amino-acid biosynthesis; L-histidine biosynthesis; L-histidine from 5-phospho-alpha-D-ribose 1-diphosphate: step 3/9. In terms of biological role, catalyzes the hydrolysis of the adenine ring of phosphoribosyl-AMP. This chain is Phosphoribosyl-AMP cyclohydrolase, found in Geotalea daltonii (strain DSM 22248 / JCM 15807 / FRC-32) (Geobacter daltonii).